Reading from the N-terminus, the 308-residue chain is uncharacterized protein (308 aa).

This is an uncharacterized protein from Acanthamoeba polyphaga (Amoeba).